A 190-amino-acid chain; its full sequence is Protein GrpE (190 aa).

Residues 1-18 (MTETPNTSSEEIQTSEPS) are compositionally biased toward polar residues. Positions 1-21 (MTETPNTSSEEIQTSEPSPDN) are disordered.

Belongs to the GrpE family. Homodimer.

The protein resides in the cytoplasm. Functionally, participates actively in the response to hyperosmotic and heat shock by preventing the aggregation of stress-denatured proteins, in association with DnaK and GrpE. It is the nucleotide exchange factor for DnaK and may function as a thermosensor. Unfolded proteins bind initially to DnaJ; upon interaction with the DnaJ-bound protein, DnaK hydrolyzes its bound ATP, resulting in the formation of a stable complex. GrpE releases ADP from DnaK; ATP binding to DnaK triggers the release of the substrate protein, thus completing the reaction cycle. Several rounds of ATP-dependent interactions between DnaJ, DnaK and GrpE are required for fully efficient folding. The sequence is that of Protein GrpE from Chlamydia trachomatis serovar A (strain ATCC VR-571B / DSM 19440 / HAR-13).